The chain runs to 870 residues: Dynamin-2 (870 aa).

The region spanning 28-294 is the Dynamin-type G domain; that stretch reads HLDLPQIAVV…LTNHIRESLP (267 aa). The G1 motif stretch occupies residues 38–45; sequence GGQSAGKS. Positions 41, 43, 44, 45, 46, 59, and 60 each coordinate GDP. The G2 motif stretch occupies residues 64-66; the sequence is VTR. The tract at residues 136–139 is G3 motif; the sequence is DLPG. A G4 motif region spans residues 205–208; that stretch reads TKLD. Residues lysine 206, aspartate 208, and aspartate 211 each contribute to the GDP site. Phosphotyrosine is present on tyrosine 231. The segment at 235–238 is G5 motif; it reads VNRS. Residues asparagine 236, arginine 237, and glutamine 239 each contribute to the GDP site. Lysine 299 carries the N6-acetyllysine modification. The PH domain occupies 519–625; it reads LVIRRGWLTI…WKASFLRAGV (107 aa). Phosphotyrosine is present on tyrosine 597. An N6-acetyllysine modification is found at lysine 598. One can recognise a GED domain in the interval 653-744; sequence VETIRNLVDS…IIGDISTSTV (92 aa). A disordered region spans residues 741–870; the sequence is TSTVSTPVPP…IRPAEPSLLD (130 aa). Residue threonine 755 is modified to Phosphothreonine. A compositionally biased stretch (polar residues) spans 756–767; sequence WLQNTSGHSPTP. Position 764 is a phosphoserine; by CDK1 (serine 764). Pro residues predominate over residues 826–846; that stretch reads SAPPQIPSRPARIPPGIPPGV. The segment covering 847-864 has biased composition (low complexity); it reads PSRRAPAAPSRPTIIRPA.

This sequence belongs to the TRAFAC class dynamin-like GTPase superfamily. Dynamin/Fzo/YdjA family. Oligomerizes into a helical polymer that self-assembles around the vesicle membrane, when associated to the menbrane through lipid binding. Interacts with SHANK1 and SHANK2. Interacts with SNX9. Interacts (via C-terminal proline-rich domain (PRD)) with SNX18 (via SH3 domain); this interaction regulates ATG9A and ATG16L1 trafficking from recycling endosomes to sites of autophagosome formation. Interacts with SNX33 (via SH3 domain). Interacts with MYO1E (via SH3 domain). Interacts with PSTPIP1 (via SH3 domain). Interacts with CTNND2. Interacts (via C-terminal proline-rich domain (PRD)) with BIN1 (via SH3 domain); this interaction allows the recruitment of DNM2 to the membrane tubules and inhibits self-assembly-stimulated GTPase activity on the membrane. Interacts with GABARAP, GABARAPL1 and GABARAPL2. Interacts with MAP1LC3B (the lipidate and non-lipidated LC3 form); this interaction mediates recycling endosome scission leading to autophagosome release. Interacts with ITSN1. Interacts (via C-terminal proline-rich domain (PRD)) with SH3BP4 (via SH3 domain); this interaction controls the GTPase activity and is prevented by EGFR-induced tyrosine phosphorylation of either DNM2 or SH3BP4. Interacts with MYOF. May interact with PIK3C3. May be a component of a complex composed of RAB5A (in GDP-bound form), DYN2 and PIK3C3. Interacts with SDC4; this interaction is markedly enhanced at focal ahesion site upon induction of focal adhesions and stress-fiber formation. Interacts with ACTN1. Interacts with CTTN; this interaction stimulates the intrinsic GTPase activity of DNM2 and stabilizes the association of DNM2 and actin filaments; in addition this interaction is stimulated by ligand binding to the receptor, leading to the recruitment of the DNM2-CTTN complex to the sequestered receptor-ligand complex to its internalization. Interacts with NOSTRIN (via SH3 domain); this interaction allows the recruitment of NOS3 to dynamin-positive structures. Interacts with TUBG1; this interaction may participate in centrosome cohesion. In terms of processing, phosphorylation at Ser-848 by GSK3-alpha relieves the inhibition of BIN1 and promotes endocytosis. Phosphorylation at Ser-764 by CDK1 is greatly increased upon mitotic entry. It regulates cytokinesis downstream of calcineurin, and does not affect clathrin-mediated endocytosis. Dephosphorylated by calcineurin/PP2 during cytokinesis in a Ca(2+)- and calmodulin-dependent manner. Phosphorylated on tyrosine residues by EGFR. Phosphorylated on tyrosine residues after activation of SRC. Expressed in most tissues during embryonic development, including the peripheral nervous system although no expression is evident in skeletal muscle or heart.

It is found in the cytoplasm. The protein resides in the cytoskeleton. The protein localises to the cytoplasmic vesicle. It localises to the clathrin-coated vesicle. Its subcellular location is the cell projection. It is found in the uropodium. The protein resides in the endosome. The protein localises to the microtubule organizing center. It localises to the centrosome. Its subcellular location is the centriole. It is found in the recycling endosome. The protein resides in the phagocytic cup. The protein localises to the phagosome membrane. It localises to the podosome. Its subcellular location is the cell junction. It is found in the postsynaptic density. The protein resides in the synapse. The protein localises to the synaptosome. It localises to the midbody. Its subcellular location is the membrane. It is found in the clathrin-coated pit. The enzyme catalyses GTP + H2O = GDP + phosphate + H(+). Catalyzes the hydrolysis of GTP and utilizes this energy to mediate vesicle scission at plasma membrane during endocytosis and filament remodeling at many actin structures during organization of the actin cytoskeleton. Plays an important role in vesicular trafficking processes, namely clathrin-mediated endocytosis (CME), exocytic and clathrin-coated vesicle from the trans-Golgi network, and PDGF stimulated macropinocytosis. During vesicular trafficking process, associates to the membrane, through lipid binding, and self-assembles into ring-like structure through oligomerization to form a helical polymer around the vesicle membrane and leading to vesicle scission. Plays a role in organization of the actin cytoskeleton by mediating arrangement of stress fibers and actin bundles in podocytes. During organization of the actin cytoskeleton, self-assembles into ring-like structure that directly bundles actin filaments to form typical membrane tubules decorated with dynamin spiral polymers. Self-assembly increases GTPase activity and the GTP hydrolysis causes the rapid depolymerization of dynamin spiral polymers, and results in dispersion of actin bundles. Remodels, through its interaction with CTTN, bundled actin filaments in a GTPase-dependent manner and plays a role in orchestrating the global actomyosin cytoskeleton. The interaction with CTTN stabilizes the interaction of DNM2 and actin filaments and stimulates the intrinsic GTPase activity that results in actin filament-barbed ends and increases the sensitivity of filaments in bundles to the actin depolymerizing factor, CFL1. Plays a role in the autophagy process, by participating in the formation of ATG9A vesicles destined for the autophagosomes through its interaction with SNX18, by mediating recycling endosome scission leading to autophagosome release through MAP1LC3B interaction. Also regulates maturation of apoptotic cell corpse-containing phagosomes by recruiting PIK3C3 to the phagosome membrane. Also plays a role in cytokinesis. May participate in centrosome cohesion through its interaction with TUBG1. Plays a role in the regulation of neuron morphology, axon growth and formation of neuronal growth cones. Involved in membrane tubulation. The sequence is that of Dynamin-2 from Mus musculus (Mouse).